The primary structure comprises 99 residues: UPF0751 protein BCAH820_B0138 (99 aa).

The protein belongs to the UPF0751 family.

In Bacillus cereus (strain AH820), this protein is UPF0751 protein BCAH820_B0138.